Consider the following 602-residue polypeptide: Glutamine--fructose-6-phosphate aminotransferase [isomerizing] (602 aa).

C2 serves as the catalytic Nucleophile; for GATase activity. Residues 2-219 (CGIIGYIGDR…DGEYAILTKD (218 aa)) enclose the Glutamine amidotransferase type-2 domain. SIS domains follow at residues 280–420 (VAEE…VLGT) and 453–592 (LAET…PDKP). The active-site For Fru-6P isomerization activity is K597.

Homodimer.

It is found in the cytoplasm. The catalysed reaction is D-fructose 6-phosphate + L-glutamine = D-glucosamine 6-phosphate + L-glutamate. Functionally, catalyzes the first step in hexosamine metabolism, converting fructose-6P into glucosamine-6P using glutamine as a nitrogen source. This Thermococcus kodakarensis (strain ATCC BAA-918 / JCM 12380 / KOD1) (Pyrococcus kodakaraensis (strain KOD1)) protein is Glutamine--fructose-6-phosphate aminotransferase [isomerizing].